Here is a 36-residue protein sequence, read N- to C-terminus: Pancreatic polypeptide (36 aa).

The residue at position 36 (Y36) is a Tyrosine amide.

This sequence belongs to the NPY family.

Its subcellular location is the secreted. Its function is as follows. Hormone secreted by pancreatic cells that acts as a regulator of pancreatic and gastrointestinal functions. This Meleagris gallopavo (Wild turkey) protein is Pancreatic polypeptide (PPY).